The following is a 460-amino-acid chain: Probable glucan endo-1,3-beta-glucosidase eglC (460 aa).

Positions 1 to 18 (MQLAQLAAFAMTLATSEA) are cleaved as a signal peptide. Glu-128 acts as the Proton donor in catalysis. An N-linked (GlcNAc...) asparagine glycan is attached at Asn-183. Glu-239 acts as the Nucleophile in catalysis. N-linked (GlcNAc...) asparagine glycosylation is found at Asn-312, Asn-367, and Asn-373. The disordered stretch occupies residues 379 to 437 (RPSGSASARPSAGAISSGSGSSSSGSGSSGSTGTSATSGQSSSSGSSAAAGSSSPAAFS). The span at 380–437 (PSGSASARPSAGAISSGSGSSSSGSGSSGSTGTSATSGQSSSSGSSAAAGSSSPAAFS) shows a compositional bias: low complexity. Residue Ser-430 is the site of GPI-anchor amidated serine attachment. Residues 431–460 (SSPAAFSGASTLSGSLFGAVVAVFMTLAAL) constitute a propeptide, removed in mature form.

Belongs to the glycosyl hydrolase 17 family. In terms of processing, the GPI-anchor is attached to the protein in the endoplasmic reticulum and serves to target the protein to the cell surface. There, the glucosamine-inositol phospholipid moiety is cleaved off and the GPI-modified mannoprotein is covalently attached via its lipidless GPI glycan remnant to the 1,6-beta-glucan of the outer cell wall layer.

The protein localises to the cell membrane. It localises to the secreted. Its subcellular location is the cell wall. It carries out the reaction Hydrolysis of (1-&gt;3)-beta-D-glucosidic linkages in (1-&gt;3)-beta-D-glucans.. In terms of biological role, glucanases play a role in cell expansion during growth, in cell-cell fusion during mating, and in spore release during sporulation. This enzyme may be involved in beta-glucan degradation and also function biosynthetically as a transglycosylase. In Aspergillus niger (strain ATCC MYA-4892 / CBS 513.88 / FGSC A1513), this protein is Probable glucan endo-1,3-beta-glucosidase eglC (eglC).